The following is a 415-amino-acid chain: All trans-polyprenyl-diphosphate synthase PDSS1 (415 aa).

The tract at residues Pro16 to Ser35 is disordered. Residues Lys134, Arg137, and His173 each contribute to the isopentenyl diphosphate site. 2 residues coordinate Mg(2+): Asp180 and Asp184. Residue Arg190 coordinates isopentenyl diphosphate.

The protein belongs to the FPP/GGPP synthase family. In terms of assembly, heterotetramer composed of 2 PDSS1/DPS1 and 2 PDSS2/DLP1 subunits. Mg(2+) is required as a cofactor.

It is found in the mitochondrion. The catalysed reaction is 7 isopentenyl diphosphate + (2E,6E)-farnesyl diphosphate = all-trans-decaprenyl diphosphate + 7 diphosphate. The enzyme catalyses 6 isopentenyl diphosphate + (2E,6E)-farnesyl diphosphate = all-trans-nonaprenyl diphosphate + 6 diphosphate. The protein operates within cofactor biosynthesis; ubiquinone biosynthesis. Functionally, heterotetrameric enzyme that catalyzes the condensation of farnesyl diphosphate (FPP), which acts as a primer, and isopentenyl diphosphate (IPP) to produce prenyl diphosphates of varying chain lengths and participates in the determination of the side chain of ubiquinone. Supplies nona and decaprenyl diphosphate, the precursors for the side chain of the isoprenoid quinones ubiquinone-9 (Q9)and ubiquinone-10 (Q10) respectively. The enzyme adds isopentenyl diphosphate molecules sequentially to farnesyl diphosphate with trans stereochemistry. The chain is All trans-polyprenyl-diphosphate synthase PDSS1 from Homo sapiens (Human).